Reading from the N-terminus, the 344-residue chain is Autoinducer 2 import system permease protein LsrC (344 aa).

9 consecutive transmembrane segments (helical) span residues phenylalanine 13–leucine 33, methionine 38–leucine 58, threonine 69–threonine 89, alanine 90–valine 110, isoleucine 114–tryptophan 134, phenylalanine 155–leucine 175, leucine 212–proline 232, glycine 251–leucine 271, and leucine 283–aspartate 303. Residues glutamine 323–alanine 344 form a disordered region. The span at phenylalanine 335–alanine 344 shows a compositional bias: basic and acidic residues.

The protein belongs to the binding-protein-dependent transport system permease family. AraH/RbsC subfamily. The complex is composed of two ATP-binding proteins (LsrA), two transmembrane proteins (LsrC and LsrD) and a solute-binding protein (LsrB).

It is found in the cell inner membrane. Its function is as follows. Part of the ABC transporter complex LsrABCD involved in autoinducer 2 (AI-2) import. Probably responsible for the translocation of the substrate across the membrane. The chain is Autoinducer 2 import system permease protein LsrC (lsrC) from Klebsiella pneumoniae subsp. pneumoniae (strain ATCC 700721 / MGH 78578).